The following is a 327-amino-acid chain: uncharacterized protein (327 aa).

The segment at 12–31 (PLGTTKSYHMNTSTVSPPSP) is disordered. 2 helical membrane passes run 183-203 (VSSP…PVIL) and 292-312 (VGVG…GLLM).

It localises to the membrane. This is an uncharacterized protein from Arabidopsis thaliana (Mouse-ear cress).